A 339-amino-acid chain; its full sequence is D-erythrose-4-phosphate dehydrogenase (339 aa).

NAD(+) contacts are provided by residues arginine 12–isoleucine 13 and arginine 81. Residues serine 154–threonine 156, arginine 200, threonine 213–lysine 214, and arginine 236 contribute to the substrate site. Cysteine 155 functions as the Nucleophile in the catalytic mechanism. Position 318 (asparagine 318) interacts with NAD(+).

The protein belongs to the glyceraldehyde-3-phosphate dehydrogenase family. Epd subfamily. Homotetramer.

The protein resides in the cytoplasm. The enzyme catalyses D-erythrose 4-phosphate + NAD(+) + H2O = 4-phospho-D-erythronate + NADH + 2 H(+). It participates in cofactor biosynthesis; pyridoxine 5'-phosphate biosynthesis; pyridoxine 5'-phosphate from D-erythrose 4-phosphate: step 1/5. Catalyzes the NAD-dependent conversion of D-erythrose 4-phosphate to 4-phosphoerythronate. This chain is D-erythrose-4-phosphate dehydrogenase, found in Escherichia coli O45:K1 (strain S88 / ExPEC).